We begin with the raw amino-acid sequence, 30 residues long: uncharacterized protein (30 aa).

Residues 9 to 26 (YRLVIIVLISVYYRYRFF) traverse the membrane as a helical segment.

It is found in the plastid. It localises to the chloroplast membrane. This is an uncharacterized protein from Marchantia polymorpha (Common liverwort).